The chain runs to 116 residues: Iron-sulfur cluster insertion protein ErpA (116 aa).

Iron-sulfur cluster-binding residues include cysteine 44, cysteine 108, and cysteine 110.

Belongs to the HesB/IscA family. In terms of assembly, homodimer. Iron-sulfur cluster serves as cofactor.

In terms of biological role, required for insertion of 4Fe-4S clusters for at least IspG. The protein is Iron-sulfur cluster insertion protein ErpA of Shewanella amazonensis (strain ATCC BAA-1098 / SB2B).